Reading from the N-terminus, the 182-residue chain is Ribosome maturation factor RimM (182 aa).

The region spanning 103-182 is the PRC barrel domain; sequence EGDYYWKDLM…SIEVDWDPGF (80 aa).

The protein belongs to the RimM family. As to quaternary structure, binds ribosomal protein uS19.

The protein localises to the cytoplasm. Its function is as follows. An accessory protein needed during the final step in the assembly of 30S ribosomal subunit, possibly for assembly of the head region. Essential for efficient processing of 16S rRNA. May be needed both before and after RbfA during the maturation of 16S rRNA. It has affinity for free ribosomal 30S subunits but not for 70S ribosomes. The protein is Ribosome maturation factor RimM of Escherichia coli O139:H28 (strain E24377A / ETEC).